Consider the following 661-residue polypeptide: UvrABC system protein B (661 aa).

The Helicase ATP-binding domain occupies 25-182; sequence AGLSSKKRSQ…NDLINLQYER (158 aa). 38–45 serves as a coordination point for ATP; the sequence is GITGSGKT. The Beta-hairpin motif lies at 91-114; it reads YYDYYQPEAYIARTDTFIEKDSSI. The region spanning 430–592 is the Helicase C-terminal domain; it reads QIEDLISEIQ…IIPKTINRTI (163 aa). A UVR domain is found at 621 to 656; the sequence is KTHIDKLKKEMLKAASNLEFEQAAKLRDQLKTLEEA.

It belongs to the UvrB family. Forms a heterotetramer with UvrA during the search for lesions. Interacts with UvrC in an incision complex.

The protein resides in the cytoplasm. In terms of biological role, the UvrABC repair system catalyzes the recognition and processing of DNA lesions. A damage recognition complex composed of 2 UvrA and 2 UvrB subunits scans DNA for abnormalities. Upon binding of the UvrA(2)B(2) complex to a putative damaged site, the DNA wraps around one UvrB monomer. DNA wrap is dependent on ATP binding by UvrB and probably causes local melting of the DNA helix, facilitating insertion of UvrB beta-hairpin between the DNA strands. Then UvrB probes one DNA strand for the presence of a lesion. If a lesion is found the UvrA subunits dissociate and the UvrB-DNA preincision complex is formed. This complex is subsequently bound by UvrC and the second UvrB is released. If no lesion is found, the DNA wraps around the other UvrB subunit that will check the other stand for damage. This Rickettsia massiliae (strain Mtu5) protein is UvrABC system protein B.